Here is a 755-residue protein sequence, read N- to C-terminus: Serine/threonine-protein kinase GL21140 (755 aa).

Residues 18–52 (QASASGSGTPKKTAASSAAAQNSKQLLDQLSQQQK) show a composition bias toward low complexity. The disordered stretch occupies residues 18-128 (QASASGSGTP…GSANTNGSAS (111 aa)). 2 stretches are compositionally biased toward basic and acidic residues: residues 53–66 (AQEE…RDCD) and 74–84 (EPEKDLDELRD). Positions 87-99 (GSLTGSGSVGKSN) are enriched in polar residues. Residues 100-128 (GSLSGASSTTSAPAGTSTPGSANTNGSAS) show a composition bias toward low complexity. Doublecortin domains are found at residues 157–243 (HRIK…VDYN) and 314–397 (RIVT…VDDF). A Protein kinase domain is found at 484-742 (YTLSQIIGDG…SEDILDHYWT (259 aa)). Residues 490–498 (IGDGNFAIV) and lysine 513 each bind ATP. Aspartate 605 acts as the Proton acceptor in catalysis.

Belongs to the protein kinase superfamily. CAMK Ser/Thr protein kinase family. CaMK subfamily.

It catalyses the reaction L-seryl-[protein] + ATP = O-phospho-L-seryl-[protein] + ADP + H(+). The catalysed reaction is L-threonyl-[protein] + ATP = O-phospho-L-threonyl-[protein] + ADP + H(+). This is Serine/threonine-protein kinase GL21140 from Drosophila persimilis (Fruit fly).